We begin with the raw amino-acid sequence, 52 residues long: Teratocyte protein CftICK-I (52 aa).

The signal sequence occupies residues 1-19; the sequence is MYKLCILFLVVIFAVMAIA. 3 disulfide bridges follow: Cys-22/Cys-37, Cys-29/Cys-41, and Cys-36/Cys-51.

In terms of tissue distribution, abundantly expressed by teratocytes, which are extra-embryonic cells released by parasitoid wasps into their hosts during larval eclosion.

It localises to the secreted. Functionally, this endoparasitoid wasp peptide has immununosuppressive, antimicrobial and insecticidal activities. Suppress cellular immunity which is detectable as a reduction of hemocyte encapsulation in the host. Shows potent antifungal activity against C.albicans (MIC~0.25 ug/ml). In vivo, ingestion of this peptide (probably at excessive doses) increases larval mortality and reduces leaf consumption of D.saccharalis, a permissive host for C.flavipes. The sequence is that of Teratocyte protein CftICK-I from Cotesia flavipes (Parasitic wasp).